We begin with the raw amino-acid sequence, 463 residues long: MTTETRSLYSQLPAIDRLLRDSSFLSLRDTYGHTRVVELLRQMLDEAREVIRDSQTLPAWCENWAQEVDARLTKEAQSALRPVINLTGTVLHTNLGRALQAEAAVEAVAQAMRSPVTLEYDLDDAGRGHRDRALAQLLCRITGAEDACIVNNNAAAVLLMLAATASGKEVVVSRGELVEIGGAFRIPDVMRQAGCTLHEVGTTNRTHANDYRQAVNENTALLMKVHTSNYSIQGFTKAIDEAELVALGKELDVPVVTDLGSGSLVDLSQYGLPKEPMPQELIAAGVSLVSFSGDKLLGGPQAGIIVGKKEMIARLQSHPLKRALRADKMTLAALEATLRLYLHPEALSEKLPTLRLLTRSAEVIQIQAQRLQAPLAAHYGAEFAVQVMPCLSQIGSGSLPVDRLPSAALTFTPHDGRGSHLESLAARWRELPVPMIGRIYDGRLWLDLRCLEDEQRFLEMLLK.

An N6-(pyridoxal phosphate)lysine modification is found at lysine 295.

Belongs to the SelA family. Homodecamer; pentamer of dimers. Binds only one seryl-tRNA(Sec) per dimer. Requires pyridoxal 5'-phosphate as cofactor.

It localises to the cytoplasm. The catalysed reaction is L-seryl-tRNA(Sec) + selenophosphate + H(+) = L-selenocysteinyl-tRNA(Sec) + phosphate. Its pathway is aminoacyl-tRNA biosynthesis; selenocysteinyl-tRNA(Sec) biosynthesis; selenocysteinyl-tRNA(Sec) from L-seryl-tRNA(Sec) (bacterial route): step 1/1. In terms of biological role, converts seryl-tRNA(Sec) to selenocysteinyl-tRNA(Sec) required for selenoprotein biosynthesis. This Shigella sonnei (strain Ss046) protein is L-seryl-tRNA(Sec) selenium transferase.